The sequence spans 132 residues: Small ribosomal subunit protein uS11 (132 aa).

Residues 108 to 132 form a disordered region; sequence GRIEDVTPVPHDSCRPKGGRRGRRV.

This sequence belongs to the universal ribosomal protein uS11 family. As to quaternary structure, part of the 30S ribosomal subunit.

Its function is as follows. Located on the platform of the 30S subunit. In Methanoregula boonei (strain DSM 21154 / JCM 14090 / 6A8), this protein is Small ribosomal subunit protein uS11.